A 172-amino-acid chain; its full sequence is GTP-dependent dephospho-CoA kinase (172 aa).

GTP-binding residues include D40, V41, V42, D59, and E112.

This sequence belongs to the GTP-dependent DPCK family.

It carries out the reaction 3'-dephospho-CoA + GTP = GDP + CoA + H(+). It functions in the pathway cofactor biosynthesis; coenzyme A biosynthesis. Catalyzes the GTP-dependent phosphorylation of the 3'-hydroxyl group of dephosphocoenzyme A to form coenzyme A (CoA). The polypeptide is GTP-dependent dephospho-CoA kinase (Methanospirillum hungatei JF-1 (strain ATCC 27890 / DSM 864 / NBRC 100397 / JF-1)).